Reading from the N-terminus, the 1269-residue chain is Histone-lysine N-methyltransferase SETDB1 (1269 aa).

Residues 9-63 (KELGISMDDLRELIDRELEKIEFVKQRKAQLLEMEQLVKQKEAEVDHVDKLFDNA) adopt a coiled-coil conformation. Disordered regions lie at residues 85–121 (YKES…GEAV) and 153–188 (QKKS…DMSK). The span at 103–112 (EIPDEDDDDV) shows a compositional bias: acidic residues. Residues 164-177 (SSHPSSPTSSVGGS) show a composition bias toward low complexity. Tudor domains follow at residues 250–312 (ENLT…RPWS) and 340–395 (VLLK…MFSM). Over residues 396-414 (KTSNASTQEKQQAGQQRTR) the composition is skewed to polar residues. The interval 396 to 516 (KTSNASTQEK…FQSNQSVQPV (121 aa)) is disordered. The segment covering 462–476 (DSQQAQSKKQVAKKS) has biased composition (low complexity). Over residues 486–497 (SGQSSPIPTESV) the composition is skewed to polar residues. The MBD domain occupies 620 to 691 (HRGKNPLLVP…EMFCLDPYVL (72 aa)). The Pre-SET domain occupies 753–826 (VGCDCTDGCR…MCNNRLVQHG (74 aa)). Positions 755, 757, 761, 767, 769, 807, 811, 813, and 818 each coordinate Zn(2+). The 416-residue stretch at 829–1244 (VRLQLFKTQN…AGTELTWDYN (416 aa)) folds into the SET domain. Residues 839-841 (KGW), Asp877, and Tyr879 contribute to the S-adenosyl-L-methionine site. The disordered stretch occupies residues 894–1139 (EGYESDAKSS…VAASAGPVKR (246 aa)). The span at 919–932 (SGSEDQEESNDSSD) shows a compositional bias: acidic residues. Composition is skewed to basic and acidic residues over residues 968 to 989 (ASKD…ETSK) and 1021 to 1033 (ETDK…EASK). The span at 1078–1094 (TEEVLTLSSSSDSEVGS) shows a compositional bias: low complexity. Over residues 1106-1120 (ATANDSDDIQTISSG) the composition is skewed to polar residues. S-adenosyl-L-methionine contacts are provided by residues Arg1198 and 1201–1202 (NH). Zn(2+) contacts are provided by Cys1204, Cys1257, Cys1259, and Cys1264. In terms of domain architecture, Post-SET spans 1253–1269 (KKLLCCCGSTECRGRLL).

It belongs to the class V-like SAM-binding methyltransferase superfamily. Histone-lysine methyltransferase family. Suvar3-9 subfamily.

It localises to the nucleus. The protein localises to the chromosome. The enzyme catalyses N(6),N(6)-dimethyl-L-lysyl(9)-[histone H3] + S-adenosyl-L-methionine = N(6),N(6),N(6)-trimethyl-L-lysyl(9)-[histone H3] + S-adenosyl-L-homocysteine + H(+). Functionally, histone methyltransferase that specifically trimethylates 'Lys-9' of histone H3. H3 'Lys-9' trimethylation represents a specific tag for epigenetic transcriptional repression by recruiting HP1 (CBX1, CBX3 and/or CBX5) proteins to methylated histones. Mainly functions in euchromatin regions, thereby playing a central role in the silencing of euchromatic genes. H3 'Lys-9' trimethylation is coordinated with DNA methylation. Plays a role in promoter hypermethylation and transcriptional silencing of tumor suppressor genes (TSGs) or other tumor-related genes. Also required to maintain a transcriptionally repressive state of genes in undifferentiated embryonic stem cells (ESCs). Associates at promoter regions of tumor suppressor genes (TSGs) leading to their gene silencing. In Xenopus laevis (African clawed frog), this protein is Histone-lysine N-methyltransferase SETDB1 (setdb1).